Consider the following 644-residue polypeptide: Arginine--tRNA ligase (644 aa).

A 'HIGH' region motif is present at residues 129–139; sequence ANPIHPLHLGH.

The protein belongs to the class-I aminoacyl-tRNA synthetase family.

It is found in the cytoplasm. It catalyses the reaction tRNA(Arg) + L-arginine + ATP = L-arginyl-tRNA(Arg) + AMP + diphosphate. This chain is Arginine--tRNA ligase (argS), found in Aeropyrum pernix (strain ATCC 700893 / DSM 11879 / JCM 9820 / NBRC 100138 / K1).